A 428-amino-acid chain; its full sequence is MNIAVVGLSHKTAPVEIREKLSIPEPQTESAIAQLTSYPHIDEVAILSTCNRLEIYIVAGETDHGIREVTQFLSEHSKLPVHSLRQHLFVLLHEDAVMHIMRVAAGLDSLVLGEGQILAQVKNTHKLGQQYNGIKTILNRLFKQALTAGKRVRTETSIGTGAVSISSAAVELAQIKAENLAACRVTILGAGKMSRLLVQHLVSKGATQISIVNRSRERAQELAKQFSEHPIRTHLLPEMMTVIAESHLVFTSTSATEPILDRAKLEMVLAPNQPLMLFDISVPRNVHTDVNELANVQAFNVDDLKAVVAQNYESRRKMAQEAERLLEEEIEAFDIWWRSLETVSTISSLRSKIETIREQELEKALSRLGSEFGDKHQEVIEALTRGIVNKILHDPMVQLRAQQDVEARRRCMQTLQMLFNLDVGEQFS.

Substrate-binding positions include 49–52 (TCNR), serine 109, 114–116 (EGQ), and glutamine 120. Residue cysteine 50 is the Nucleophile of the active site. 189-194 (GAGKMS) contacts NADP(+).

Belongs to the glutamyl-tRNA reductase family. As to quaternary structure, homodimer.

The enzyme catalyses (S)-4-amino-5-oxopentanoate + tRNA(Glu) + NADP(+) = L-glutamyl-tRNA(Glu) + NADPH + H(+). It functions in the pathway porphyrin-containing compound metabolism; protoporphyrin-IX biosynthesis; 5-aminolevulinate from L-glutamyl-tRNA(Glu): step 1/2. Its pathway is porphyrin-containing compound metabolism; chlorophyll biosynthesis. In terms of biological role, catalyzes the NADPH-dependent reduction of glutamyl-tRNA(Glu) to glutamate 1-semialdehyde (GSA). In Trichormus variabilis (strain ATCC 29413 / PCC 7937) (Anabaena variabilis), this protein is Glutamyl-tRNA reductase.